Consider the following 102-residue polypeptide: Integration host factor subunit alpha (102 aa).

It belongs to the bacterial histone-like protein family. As to quaternary structure, heterodimer of an alpha and a beta chain.

This protein is one of the two subunits of integration host factor, a specific DNA-binding protein that functions in genetic recombination as well as in transcriptional and translational control. The chain is Integration host factor subunit alpha from Chromohalobacter salexigens (strain ATCC BAA-138 / DSM 3043 / CIP 106854 / NCIMB 13768 / 1H11).